Reading from the N-terminus, the 423-residue chain is GPI mannosyltransferase 2 (423 aa).

9 consecutive transmembrane segments (helical) span residues 7–27 (LTLI…ILSG), 102–122 (VILG…LVLY), 128–148 (IFNP…PTAT), 151–171 (APYT…LLSI), 191–211 (TGIF…AHIF), 228–248 (FLSA…TETV), 298–318 (LAMP…SHLV), 333–353 (PPPI…LLLF), and 400–420 (YWIG…AGHY).

It belongs to the PIGV family.

Its subcellular location is the endoplasmic reticulum membrane. It participates in glycolipid biosynthesis; glycosylphosphatidylinositol-anchor biosynthesis. In terms of biological role, mannosyltransferase involved in glycosylphosphatidylinositol-anchor biosynthesis. Transfers the second mannose to the glycosylphosphatidylinositol during GPI precursor assembly. In Cryptococcus neoformans var. neoformans serotype D (strain B-3501A) (Filobasidiella neoformans), this protein is GPI mannosyltransferase 2 (GPI18).